Consider the following 305-residue polypeptide: RxLR effector protein 17 (305 aa).

The N-terminal stretch at 1–24 is a signal peptide; it reads MQSILWFALIASVVFLVLVDLASG. The RxLR-dEER motif lies at 45-60; it reads RLLRAAHLDRKLSEER. N-linked (GlcNAc...) asparagine glycans are attached at residues Asn207 and Asn227. The tract at residues 247–269 is w motif; sequence LHLKWAVEAKSPKDVVERILKDL.

The protein belongs to the RxLR effector family. Interacts with host A.thaliana At1G14340.

The protein resides in the secreted. It is found in the host cell membrane. Functionally, secreted effector that confers enhanced plant susceptibility during both compatible and incompatible interactions between the pathogen and its host. Promotes the sexual reproduction of the pathogen in the plant host. The protein is RxLR effector protein 17 of Hyaloperonospora arabidopsidis (strain Emoy2) (Downy mildew agent).